Here is a 243-residue protein sequence, read N- to C-terminus: CTD nuclear envelope phosphatase 1 homolog (243 aa).

Residues 11–27 traverse the membrane as a helical segment; that stretch reads ALLLLLSKVWTCICFMF. Residues 56 to 223 enclose the FCP1 homology domain; it reads SLVQRKTLVL…LSLLPMLDAL (168 aa).

It belongs to the dullard family.

The protein localises to the membrane. The catalysed reaction is O-phospho-L-seryl-[protein] + H2O = L-seryl-[protein] + phosphate. It carries out the reaction O-phospho-L-threonyl-[protein] + H2O = L-threonyl-[protein] + phosphate. Serine/threonine protein phosphatase that may dephosphorylate and activate lipin-like phosphatases. Lipins are phosphatidate phosphatases that catalyze the conversion of phosphatidic acid to diacylglycerol and control the metabolism of fatty acids at different levels. May indirectly modulate the lipid composition of nuclear and/or endoplasmic reticulum membranes and be required for proper nuclear membrane morphology and/or dynamics. May also indirectly regulate the production of lipid droplets and triacylglycerol. The chain is CTD nuclear envelope phosphatase 1 homolog (Dd) from Drosophila melanogaster (Fruit fly).